Here is a 123-residue protein sequence, read N- to C-terminus: Large ribosomal subunit protein uL24 (123 aa).

This sequence belongs to the universal ribosomal protein uL24 family. In terms of assembly, part of the 50S ribosomal subunit.

Its function is as follows. One of two assembly initiator proteins, it binds directly to the 5'-end of the 23S rRNA, where it nucleates assembly of the 50S subunit. Located at the polypeptide exit tunnel on the outside of the subunit. This Methanocella arvoryzae (strain DSM 22066 / NBRC 105507 / MRE50) protein is Large ribosomal subunit protein uL24.